The following is a 404-amino-acid chain: Cysteine desulfurase IscS (404 aa).

Residues 75–76 (AT), N155, Q183, and 203–205 (SAH) contribute to the pyridoxal 5'-phosphate site. K206 carries the N6-(pyridoxal phosphate)lysine modification. T243 contributes to the pyridoxal 5'-phosphate binding site. C328 acts as the Cysteine persulfide intermediate in catalysis. Residue C328 participates in [2Fe-2S] cluster binding.

This sequence belongs to the class-V pyridoxal-phosphate-dependent aminotransferase family. NifS/IscS subfamily. As to quaternary structure, homodimer. Forms a heterotetramer with IscU, interacts with other sulfur acceptors. It depends on pyridoxal 5'-phosphate as a cofactor.

The protein localises to the cytoplasm. It catalyses the reaction (sulfur carrier)-H + L-cysteine = (sulfur carrier)-SH + L-alanine. Its pathway is cofactor biosynthesis; iron-sulfur cluster biosynthesis. Functionally, master enzyme that delivers sulfur to a number of partners involved in Fe-S cluster assembly, tRNA modification or cofactor biosynthesis. Catalyzes the removal of elemental sulfur atoms from cysteine to produce alanine. Functions as a sulfur delivery protein for Fe-S cluster synthesis onto IscU, an Fe-S scaffold assembly protein, as well as other S acceptor proteins. The polypeptide is Cysteine desulfurase IscS (Pseudomonas syringae pv. syringae (strain B728a)).